Reading from the N-terminus, the 194-residue chain is Protein PHLOEM PROTEIN 2-LIKE A2 (194 aa).

A helical membrane pass occupies residues 49–71; sequence VTFVFFCFFKISLNSAYLYTLYS.

In terms of tissue distribution, vascular tissues, specifically in phloem companion cell-sieve element complexes.

The protein localises to the membrane. This is Protein PHLOEM PROTEIN 2-LIKE A2 (PP2A2) from Arabidopsis thaliana (Mouse-ear cress).